The following is a 264-amino-acid chain: Thymidylate synthase (264 aa).

Position 21 (Arg-21) interacts with dUMP. His-51 contacts (6R)-5,10-methylene-5,6,7,8-tetrahydrofolate. A dUMP-binding site is contributed by 126–127 (RR). The active-site Nucleophile is Cys-146. DUMP-binding positions include 166–169 (RSCD), Asn-177, and 207–209 (HLY). Position 169 (Asp-169) interacts with (6R)-5,10-methylene-5,6,7,8-tetrahydrofolate. Residue Ala-263 coordinates (6R)-5,10-methylene-5,6,7,8-tetrahydrofolate.

The protein belongs to the thymidylate synthase family. Bacterial-type ThyA subfamily. Homodimer.

The protein localises to the cytoplasm. The catalysed reaction is dUMP + (6R)-5,10-methylene-5,6,7,8-tetrahydrofolate = 7,8-dihydrofolate + dTMP. It participates in pyrimidine metabolism; dTTP biosynthesis. Functionally, catalyzes the reductive methylation of 2'-deoxyuridine-5'-monophosphate (dUMP) to 2'-deoxythymidine-5'-monophosphate (dTMP) while utilizing 5,10-methylenetetrahydrofolate (mTHF) as the methyl donor and reductant in the reaction, yielding dihydrofolate (DHF) as a by-product. This enzymatic reaction provides an intracellular de novo source of dTMP, an essential precursor for DNA biosynthesis. The sequence is that of Thymidylate synthase from Sodalis glossinidius (strain morsitans).